The primary structure comprises 1127 residues: 5'-3' exoribonuclease 2 (1127 aa).

A coiled-coil region spans residues 121-147 (SRRFRAAQEAADKEEERREAIKLFEAM). The segment at 270–287 (HACKNCGKVGHIAANCKS) adopts a CCHC-type zinc-finger fold. 3 stretches are compositionally biased toward basic and acidic residues: residues 411–447 (FQKR…EDRN), 541–551 (VDDKKAIAQEG), and 570–588 (EQLT…GEKE). Disordered regions lie at residues 411–448 (FQKR…DRNT), 532–678 (ELEG…LKVN), 962–1033 (TESD…APAP), and 1069–1127 (APAP…PSRR). A coiled-coil region spans residues 412–441 (QKRKDDEERQEHSQKRRRIEEHKRQDEDKA). Acidic residues-rich tracts occupy residues 617–629 (ENDE…DDED) and 643–660 (DGDE…DDDA). The segment covering 984–996 (GGGNGNVTGGPGM) has biased composition (gly residues). Residues 1083-1101 (YVPPLPPPNPYSAPPPAYG) show a composition bias toward pro residues.

The protein belongs to the 5'-3' exonuclease family. XRN2/RAT1 subfamily. As to quaternary structure, interacts with RAI1; the interaction is direct, stabilizes RAT1 protein structure and may stimulate its exoribonuclease activity. The interaction also stimulates RAI1 pyrophosphohydrolase activity, probably by recruiting it to mRNA substrates.

The protein resides in the nucleus. Its function is as follows. Possesses 5'-&gt;3' exoribonuclease activity. Required for the processing of nuclear mRNA and rRNA precursors. May promote the termination of transcription by RNA polymerase II. Essential for vegetative cell growth and chromosome segregation. The chain is 5'-3' exoribonuclease 2 (RAT1) from Cryptococcus neoformans var. neoformans serotype D (strain JEC21 / ATCC MYA-565) (Filobasidiella neoformans).